We begin with the raw amino-acid sequence, 123 residues long: Small ribosomal subunit protein eS25 (123 aa).

Residues 1 to 13 are compositionally biased toward basic and acidic residues; that stretch reads MPPKKDTKGDSKK. Positions 1–34 are disordered; the sequence is MPPKKDTKGDSKKGQKAKAGSGGGKAKKKKWSKG. Residues 25–34 show a composition bias toward basic residues; the sequence is KAKKKKWSKG.

This sequence belongs to the eukaryotic ribosomal protein eS25 family.

The chain is Small ribosomal subunit protein eS25 (RPS25) from Branchiostoma belcheri (Amphioxus).